Reading from the N-terminus, the 410-residue chain is Ribonucleoside-diphosphate reductase small chain (410 aa).

Polar residues predominate over residues 1–20 (MSVQTSPSKQVTSGIQNLNM). 2 disordered regions span residues 1 to 43 (MSVQ…DEDL) and 55 to 78 (NANK…ANEP). Basic and acidic residues-rich tracts occupy residues 23-43 (PAKK…DEDL) and 55-65 (NANKKAAEAKK). Fe cation contacts are provided by aspartate 146, glutamate 177, and histidine 180. Tyrosine 184 is an active-site residue. 3 residues coordinate Fe cation: glutamate 240, glutamate 274, and histidine 277.

It belongs to the ribonucleoside diphosphate reductase small chain family. Heterodimer of a large and a small subunit. Fe cation serves as cofactor.

The enzyme catalyses a 2'-deoxyribonucleoside 5'-diphosphate + [thioredoxin]-disulfide + H2O = a ribonucleoside 5'-diphosphate + [thioredoxin]-dithiol. Provides the precursors necessary for DNA synthesis. Catalyzes the biosynthesis of deoxyribonucleotides from the corresponding ribonucleotides. The sequence is that of Ribonucleoside-diphosphate reductase small chain (rnr-2) from Neurospora crassa (strain ATCC 24698 / 74-OR23-1A / CBS 708.71 / DSM 1257 / FGSC 987).